The sequence spans 499 residues: DNA-directed RNA polymerase subunit Rpo2N (499 aa).

The protein belongs to the RNA polymerase beta chain family. In terms of assembly, part of the RNA polymerase complex.

It localises to the cytoplasm. The catalysed reaction is RNA(n) + a ribonucleoside 5'-triphosphate = RNA(n+1) + diphosphate. Functionally, DNA-dependent RNA polymerase (RNAP) catalyzes the transcription of DNA into RNA using the four ribonucleoside triphosphates as substrates. The Rpo2 subunit (Rpo2N and Rpo2C in this organism) is implicated in DNA promoter recognition and in nucleotide binding. This chain is DNA-directed RNA polymerase subunit Rpo2N, found in Methanococcus vannielii (strain ATCC 35089 / DSM 1224 / JCM 13029 / OCM 148 / SB).